The chain runs to 98 residues: UPF0473 protein lp_2273 (98 aa).

It belongs to the UPF0473 family.

The polypeptide is UPF0473 protein lp_2273 (Lactiplantibacillus plantarum (strain ATCC BAA-793 / NCIMB 8826 / WCFS1) (Lactobacillus plantarum)).